The sequence spans 120 residues: uncharacterized protein (120 aa).

Residues 90–120 are disordered; that stretch reads SLASRGGHMTQSGQCHVSGSLLGRGHKSRGR.

This is an uncharacterized protein from Homo sapiens (Human).